The primary structure comprises 196 residues: dTTP/UTP pyrophosphatase (196 aa).

The active-site Proton acceptor is the aspartate 72.

This sequence belongs to the Maf family. YhdE subfamily. The cofactor is a divalent metal cation.

The protein localises to the cytoplasm. It carries out the reaction dTTP + H2O = dTMP + diphosphate + H(+). It catalyses the reaction UTP + H2O = UMP + diphosphate + H(+). Functionally, nucleoside triphosphate pyrophosphatase that hydrolyzes dTTP and UTP. May have a dual role in cell division arrest and in preventing the incorporation of modified nucleotides into cellular nucleic acids. The polypeptide is dTTP/UTP pyrophosphatase (Chlamydia trachomatis serovar L2 (strain ATCC VR-902B / DSM 19102 / 434/Bu)).